The following is a 172-amino-acid chain: 3-hydroxydecanoyl-[acyl-carrier-protein] dehydratase (172 aa).

Residue H71 is part of the active site.

This sequence belongs to the thioester dehydratase family. FabA subfamily. Homodimer.

Its subcellular location is the cytoplasm. The enzyme catalyses a (3R)-hydroxyacyl-[ACP] = a (2E)-enoyl-[ACP] + H2O. The catalysed reaction is (3R)-hydroxydecanoyl-[ACP] = (2E)-decenoyl-[ACP] + H2O. It carries out the reaction (2E)-decenoyl-[ACP] = (3Z)-decenoyl-[ACP]. The protein operates within lipid metabolism; fatty acid biosynthesis. Its function is as follows. Necessary for the introduction of cis unsaturation into fatty acids. Catalyzes the dehydration of (3R)-3-hydroxydecanoyl-ACP to E-(2)-decenoyl-ACP and then its isomerization to Z-(3)-decenoyl-ACP. Can catalyze the dehydratase reaction for beta-hydroxyacyl-ACPs with saturated chain lengths up to 16:0, being most active on intermediate chain length. This is 3-hydroxydecanoyl-[acyl-carrier-protein] dehydratase from Sodalis glossinidius (strain morsitans).